The sequence spans 422 residues: Alcohol dehydrogenase 4 (422 aa).

Residues 1 to 29 constitute a mitochondrion transit peptide; it reads MSILRSPFRLIRSPARFFPSLFHSSCNQS. Residues D82, N114, G141, S142, T181, T182, T190, F192, K203, and G225 each contribute to the NAD(+) site. 3 residues coordinate Fe(2+): D237, H241, and H306. H310 and H320 together coordinate NAD(+). Position 320 (H320) interacts with Fe(2+).

Belongs to the iron-containing alcohol dehydrogenase family. Zn(2+) is required as a cofactor.

The protein localises to the mitochondrion matrix. The enzyme catalyses a primary alcohol + NAD(+) = an aldehyde + NADH + H(+). It carries out the reaction a secondary alcohol + NAD(+) = a ketone + NADH + H(+). The catalysed reaction is ethanol + NAD(+) = acetaldehyde + NADH + H(+). Its function is as follows. Involved in ethanol oxidation in mitochondria. The polypeptide is Alcohol dehydrogenase 4 (adh4) (Schizosaccharomyces pombe (strain 972 / ATCC 24843) (Fission yeast)).